The following is a 48-amino-acid chain: Delta-stichotoxin-Hcr1a (48 aa).

Disulfide bonds link Cys-3/Cys-43, Cys-5/Cys-33, and Cys-26/Cys-44. Lys-48 carries the lysine amide; partial; in Delta-stichotoxin-Hcr1f modification.

Belongs to the sea anemone sodium channel inhibitory toxin family. Type II subfamily. In terms of assembly, probably composed of two peptide chains of 12 and 35 residues connected by two disulfide bonds (Cys-3-Cys-43 and Cys-5-Cys-33). Post-translationally, delta-SHTX-Hcr1f (RTX-VI) may be the result of post-translational modification of delta-SHTX-Hcr1a (RTX-III), which would consist of Arg-13 cleavage.

The protein resides in the secreted. It is found in the nematocyst. Its function is as follows. Binds to site 3 of voltage-gated sodium channels and inhibits the inactivation process. Specifically inhibits mammalian Nav1.3/SCN3A and Nav1.6/SCN8A sodium channels, as well as insect BgNav1 and VdNav1 sodium channels. Functionally, binds to site 3 of voltage-gated sodium channels and inhibits the inactivation process. Specifically inhibits mammalian Nav1.2/SCN3A (low inhibition) and Nav1.6/SCN8A sodium channels, as well as insect BgNav1 and VdNav1 sodium channels. The polypeptide is Delta-stichotoxin-Hcr1a (Radianthus crispa (Leathery sea anemone)).